Here is a 347-residue protein sequence, read N- to C-terminus: N-acetyl-gamma-glutamyl-phosphate reductase (347 aa).

The active site involves C151.

It belongs to the NAGSA dehydrogenase family. Type 1 subfamily.

Its subcellular location is the cytoplasm. The catalysed reaction is N-acetyl-L-glutamate 5-semialdehyde + phosphate + NADP(+) = N-acetyl-L-glutamyl 5-phosphate + NADPH + H(+). It participates in amino-acid biosynthesis; L-arginine biosynthesis; N(2)-acetyl-L-ornithine from L-glutamate: step 3/4. Its function is as follows. Catalyzes the NADPH-dependent reduction of N-acetyl-5-glutamyl phosphate to yield N-acetyl-L-glutamate 5-semialdehyde. This chain is N-acetyl-gamma-glutamyl-phosphate reductase, found in Corynebacterium diphtheriae (strain ATCC 700971 / NCTC 13129 / Biotype gravis).